Reading from the N-terminus, the 72-residue chain is Large ribosomal subunit protein uL29 (72 aa).

It belongs to the universal ribosomal protein uL29 family.

The protein is Large ribosomal subunit protein uL29 of Prochlorococcus marinus (strain MIT 9301).